A 69-amino-acid chain; its full sequence is NAD(P)H-quinone oxidoreductase subunit L (69 aa).

2 helical membrane passes run 5 to 25 (LILL…ITYF) and 40 to 60 (GFMY…SPFL).

It belongs to the complex I NdhL subunit family. As to quaternary structure, NDH-1 can be composed of about 15 different subunits; different subcomplexes with different compositions have been identified which probably have different functions.

It localises to the cellular thylakoid membrane. It catalyses the reaction a plastoquinone + NADH + (n+1) H(+)(in) = a plastoquinol + NAD(+) + n H(+)(out). The catalysed reaction is a plastoquinone + NADPH + (n+1) H(+)(in) = a plastoquinol + NADP(+) + n H(+)(out). Functionally, NDH-1 shuttles electrons from an unknown electron donor, via FMN and iron-sulfur (Fe-S) centers, to quinones in the respiratory and/or the photosynthetic chain. The immediate electron acceptor for the enzyme in this species is believed to be plastoquinone. Couples the redox reaction to proton translocation, and thus conserves the redox energy in a proton gradient. Cyanobacterial NDH-1 also plays a role in inorganic carbon-concentration. This chain is NAD(P)H-quinone oxidoreductase subunit L, found in Acaryochloris marina (strain MBIC 11017).